The primary structure comprises 396 residues: NDP-glycosyltransferase YjiC (396 aa).

UDP-binding positions include N18, T234, V283, H298, and 302-306 (NSTME).

Belongs to the UDP-glycosyltransferase family.

The catalysed reaction is an NDP-glycose + an acceptor = a glycosylated acceptor + NDP.. In terms of biological role, glycosyltransferase that can glycosylate a wide range of substrates, including various flavonoids (flavones, flavonols, flavanones, flavanols, chalcones), isoflavonoids and stilbenes, to produce multiple glycosylated products. It can accept diverse nucleotide diphosphate-D/L-sugars as donors, including ADP-, GDP-, CDP-, TDP- or UDP-alpha-D-glucose, and catalyzes O-, N-, or S-glycosylation. In vitro, catalyzes the glycosylation of, among others, apigenin, 3-hydroxyflavone, phloretin or resveratrol, resulting in multiple glucosylated products, along with mono-, di-, tri- and tetraglucosides. Can also catalyze the glycosylation of the macrolide epothilone A with diverse NDP-D/L-sugars, forming different epothilone A glycoside derivatives. This is NDP-glycosyltransferase YjiC from Bacillus licheniformis (strain ATCC 14580 / DSM 13 / JCM 2505 / CCUG 7422 / NBRC 12200 / NCIMB 9375 / NCTC 10341 / NRRL NRS-1264 / Gibson 46).